A 1010-amino-acid polypeptide reads, in one-letter code: METESEQNSSSTNGSSSSGASSRPQIAQMSLYERQAVQALQALQRQPNAAQYFHQFMLQQQLSNAQLHSLAAVQQATIAASRQASSPNSSTAQQQTATTQASMNLATTSAAQLISRSQSVSSPSATTLTQSVLLGNTTSPPLNQSQAQMYLRPQLGNLLQVNRTLGRNVPLASQLILMPNGAVAAVQQEVPPAQSPGVHADADQVQNLAVRNQQASAQGPQMPGSTQKAIPPGASPVSGLSQTSSQALAVAQASSGASGQSLNLSQAGGGSGNSLPGSMGPGGGGQAPGGLGQLPSSGLTGGSCPRKGTGVVQPLPAAQTVTVSQGSQTEAESAAAKKAEADGSGQQSVGMNLTRTATPAPSQTLISSATYTQIQPHSLIQQQQQIHLQQKQVVIQQQIAIHHQQQFQHRQSQLLHTATHLQLAQQQQQQQQQQQQQQQQQQQQQQGTTLTAPQPPQVPPTQQVPPSQSQQQAQTLVVQPMLQSSPLTLPPEPTSKPPIPIQSKPPVAPIKPPQLGAAKMSATQQPPPHIPVQVVGTRQPGSAQAQALGLAQLAAAVPTPRGITGAVQPGQAHLASSPPSSQAAPGALQECPPALAAGMTLAPVQGTAHVVKGGPTASSPVVAQVPAAFYMQSVHLPGKAQTLAVKRKAESEEERDDLSALASVLPTKASPAAESPKVIEEKNSLGEKAEPVASLNANPPNSDLVALAPTPSAPPPTLALVSRQMGDSKPPQAIVKPQILTHIIEGFVIQEGAEPFPVGCSQFLKETKKPLQAGLPTGLNESQPSGPLGGDSPSVELEKKANLLKCEYCGKYAPAEQFRGSKRFCSMTCAKRYNVSCSHQFRLKRKKMKEFQEASYARVRRRGPRRSSSDIARAKIQGKRHRGQEDSSRGSDNSSYDEALSPTSPGPLSVRAGHGERDLGNTITTPSTPELQGINPVFLSSNPSQWSVEEVYEFIASLQGCQEIAEEFRSQEIDGQALLLLKEEHLMSAMNIKLGPALKICAKINVLKET.

A compositionally biased stretch (low complexity) spans 1 to 22 (METESEQNSSSTNGSSSSGASS). 6 disordered regions span residues 1-25 (METE…SRPQ), 212-243 (NQQA…LSQT), 259-312 (GQSL…TGVV), 444-506 (QQQG…SKPP), 565-588 (GAVQ…PGAL), and 646-678 (KRKA…SPKV). Positions 212–228 (NQQASAQGPQMPGSTQK) are enriched in polar residues. Over residues 279 to 292 (MGPGGGGQAPGGLG) the composition is skewed to gly residues. The span at 453 to 463 (PQPPQVPPTQQ) shows a compositional bias: pro residues. Low complexity predominate over residues 464-480 (VPPSQSQQQAQTLVVQP). The span at 488-500 (TLPPEPTSKPPIP) shows a compositional bias: pro residues. The span at 575-587 (ASSPPSSQAAPGA) shows a compositional bias: low complexity. Ser651 is subject to Phosphoserine. Lys769 is covalently cross-linked (Glycyl lysine isopeptide (Lys-Gly) (interchain with G-Cter in SUMO2)). The segment at 772–794 (QAGLPTGLNESQPSGPLGGDSPS) is disordered. Residues 797-831 (LEKKANLLKCEYCGKYAPAEQFRGSKRFCSMTCAK) form an FCS-type zinc finger. Zn(2+)-binding residues include Cys806, Cys809, Cys825, and Cys829. The segment at 854-928 (ASYARVRRRG…LGNTITTPST (75 aa)) is disordered. Ser904 bears the Phosphoserine mark. Position 928 is a phosphothreonine (Thr928). The region spanning 946–1010 (WSVEEVYEFI…CAKINVLKET (65 aa)) is the SAM domain.

Homodimer. Component of a PRC1-like complex. Interacts with the SAM domain of SCMH1 via its SAM domain in vitro. Interacts with RNF2 and CBX7. Interacts with PHC2. Interacts with BMI1. In terms of tissue distribution, highly expressed in testis with lower levels in most other tissues. Expressed in embryonic stem cells.

Its subcellular location is the nucleus. Component of a Polycomb group (PcG) multiprotein PRC1-like complex, a complex class required to maintain the transcriptionally repressive state of many genes, including Hox genes, throughout development. PcG PRC1 complex acts via chromatin remodeling and modification of histones; it mediates monoubiquitination of histone H2A 'Lys-119', rendering chromatin heritably changed in its expressibility. Required for proper control of cellular levels of GMNN expression. This is Polyhomeotic-like protein 1 from Mus musculus (Mouse).